Here is a 749-residue protein sequence, read N- to C-terminus: Subtilisin-like protease SBT4.14 (749 aa).

The signal sequence occupies residues 1 to 28 (MIRSKCSCHHHLLVLVMVVLWISPRYAS). The propeptide at 29-115 (AEDEHAKDFY…VSRNQYRKLH (87 aa)) is activation peptide. The Inhibitor I9 domain maps to 38 to 115 (YIIYLGDRPD…VSRNQYRKLH (78 aa)). In terms of domain architecture, Peptidase S8 spans 119–595 (SWDFVGLPLT…GGQINPRRAA (477 aa)). The Charge relay system role is filled by D145. Residue N176 is glycosylated (N-linked (GlcNAc...) asparagine). Catalysis depends on H210, which acts as the Charge relay system. 4 N-linked (GlcNAc...) asparagine glycosylation sites follow: N225, N233, N446, and N458. The Charge relay system role is filled by S536. N-linked (GlcNAc...) asparagine glycosylation is present at N618.

This sequence belongs to the peptidase S8 family. In terms of processing, the C-terminal propeptide is autocleaved. As to expression, expressed only in roots, particularly in xylem.

This is Subtilisin-like protease SBT4.14 from Arabidopsis thaliana (Mouse-ear cress).